Reading from the N-terminus, the 238-residue chain is Protein G1-like8 (238 aa).

Disordered regions lie at residues 1–33 and 147–238; these read MEGG…RYES and KARG…ATRV. Residues 10–27 show a composition bias toward low complexity; it reads GQAQPVAQAPPAMQPMQQ. The ALOG domain maps to 30 to 157; it reads RYESQKRRDW…ARGIPYEKKK (128 aa). Positions 155–159 match the Nuclear localization signal motif; it reads KKKRK. The segment covering 165 to 176 has biased composition (pro residues); sequence QPPPPPPPPPQH. Low complexity-rich tracts occupy residues 177–213 and 222–238; these read QPGA…ATSQ and TTTT…ATRV.

The protein belongs to the plant homeotic and developmental regulators ALOG protein family.

It is found in the nucleus. Functionally, probable transcription regulator that acts as a developmental regulator by promoting cell growth in response to light. The polypeptide is Protein G1-like8 (G1L8) (Oryza sativa subsp. japonica (Rice)).